A 321-amino-acid chain; its full sequence is Lipoyl synthase (321 aa).

7 residues coordinate [4Fe-4S] cluster: Cys-68, Cys-73, Cys-79, Cys-94, Cys-98, Cys-101, and Ser-308. The region spanning 80 to 297 is the Radical SAM core domain; it reads FNHGTATFMI…KVIAEDLGFS (218 aa).

It belongs to the radical SAM superfamily. Lipoyl synthase family. [4Fe-4S] cluster is required as a cofactor.

The protein resides in the cytoplasm. The catalysed reaction is [[Fe-S] cluster scaffold protein carrying a second [4Fe-4S](2+) cluster] + N(6)-octanoyl-L-lysyl-[protein] + 2 oxidized [2Fe-2S]-[ferredoxin] + 2 S-adenosyl-L-methionine + 4 H(+) = [[Fe-S] cluster scaffold protein] + N(6)-[(R)-dihydrolipoyl]-L-lysyl-[protein] + 4 Fe(3+) + 2 hydrogen sulfide + 2 5'-deoxyadenosine + 2 L-methionine + 2 reduced [2Fe-2S]-[ferredoxin]. Its pathway is protein modification; protein lipoylation via endogenous pathway; protein N(6)-(lipoyl)lysine from octanoyl-[acyl-carrier-protein]: step 2/2. Its function is as follows. Catalyzes the radical-mediated insertion of two sulfur atoms into the C-6 and C-8 positions of the octanoyl moiety bound to the lipoyl domains of lipoate-dependent enzymes, thereby converting the octanoylated domains into lipoylated derivatives. This chain is Lipoyl synthase, found in Shewanella amazonensis (strain ATCC BAA-1098 / SB2B).